The sequence spans 72 residues: Metallothionein-like protein type 2 (72 aa).

It belongs to the metallothionein superfamily. Type 15 family.

Its function is as follows. Metallothioneins have a high content of cysteine residues that bind various heavy metals. This is Metallothionein-like protein type 2 from Solanum lycopersicum (Tomato).